The primary structure comprises 173 residues: Large ribosomal subunit protein uL10 (173 aa).

The protein belongs to the universal ribosomal protein uL10 family. Part of the ribosomal stalk of the 50S ribosomal subunit. The N-terminus interacts with L11 and the large rRNA to form the base of the stalk. The C-terminus forms an elongated spine to which L12 dimers bind in a sequential fashion forming a multimeric L10(L12)X complex.

Forms part of the ribosomal stalk, playing a central role in the interaction of the ribosome with GTP-bound translation factors. This chain is Large ribosomal subunit protein uL10, found in Micrococcus luteus (strain ATCC 4698 / DSM 20030 / JCM 1464 / CCM 169 / CCUG 5858 / IAM 1056 / NBRC 3333 / NCIMB 9278 / NCTC 2665 / VKM Ac-2230) (Micrococcus lysodeikticus).